A 168-amino-acid chain; its full sequence is Bifunctional protein PyrR (168 aa).

Substrate-binding positions include 36–37, Arg77, 94–102, and Val151; these read TG and DDVLMSGRT. Residues 90 to 102 carry the PRPP-binding motif; it reads LVLIDDVLMSGRT.

It belongs to the purine/pyrimidine phosphoribosyltransferase family. PyrR subfamily.

It catalyses the reaction UMP + diphosphate = 5-phospho-alpha-D-ribose 1-diphosphate + uracil. Regulates the transcription of the pyrimidine nucleotide (pyr) operon in response to exogenous pyrimidines. Functionally, also displays a weak uracil phosphoribosyltransferase activity which is not physiologically significant. The protein is Bifunctional protein PyrR of Pseudomonas fluorescens.